We begin with the raw amino-acid sequence, 416 residues long: Gamma-glutamyl phosphate reductase (416 aa).

Belongs to the gamma-glutamyl phosphate reductase family.

It localises to the cytoplasm. It catalyses the reaction L-glutamate 5-semialdehyde + phosphate + NADP(+) = L-glutamyl 5-phosphate + NADPH + H(+). Its pathway is amino-acid biosynthesis; L-proline biosynthesis; L-glutamate 5-semialdehyde from L-glutamate: step 2/2. Catalyzes the NADPH-dependent reduction of L-glutamate 5-phosphate into L-glutamate 5-semialdehyde and phosphate. The product spontaneously undergoes cyclization to form 1-pyrroline-5-carboxylate. This chain is Gamma-glutamyl phosphate reductase, found in Vibrio parahaemolyticus serotype O3:K6 (strain RIMD 2210633).